Consider the following 279-residue polypeptide: 2-dehydro-3-deoxyphosphooctonate aldolase (279 aa).

This sequence belongs to the KdsA family.

Its subcellular location is the cytoplasm. It catalyses the reaction D-arabinose 5-phosphate + phosphoenolpyruvate + H2O = 3-deoxy-alpha-D-manno-2-octulosonate-8-phosphate + phosphate. The protein operates within carbohydrate biosynthesis; 3-deoxy-D-manno-octulosonate biosynthesis; 3-deoxy-D-manno-octulosonate from D-ribulose 5-phosphate: step 2/3. Its pathway is bacterial outer membrane biogenesis; lipopolysaccharide biosynthesis. The polypeptide is 2-dehydro-3-deoxyphosphooctonate aldolase (Desulfosudis oleivorans (strain DSM 6200 / JCM 39069 / Hxd3) (Desulfococcus oleovorans)).